The chain runs to 317 residues: Putative peptide import ATP-binding protein BruAb2_0797 (317 aa).

One can recognise an ABC transporter domain in the interval 7–250 (LSVRGLAKHY…PQHPYTRALL (244 aa)). 43–50 (GESGSGKT) contributes to the ATP binding site.

Belongs to the ABC transporter superfamily. As to quaternary structure, the complex is composed of two ATP-binding proteins (BruAb2_0796 and BruAb2_0797), two transmembrane proteins (BruAb2_0794) and a solute-binding protein (BruAb2_0792).

The protein resides in the cell inner membrane. Its function is as follows. Probably part of an ABC transporter complex that could be involved in peptide import. Probably responsible for energy coupling to the transport system. In Brucella abortus biovar 1 (strain 9-941), this protein is Putative peptide import ATP-binding protein BruAb2_0797.